Reading from the N-terminus, the 212-residue chain is External core antigen (212 aa).

A signal peptide spans 1 to 19 (MQLFHLCLIIFCSCPTVQA). The tract at residues 25 to 27 (GWL) is HBEAG. Residues 165–212 (NAPILSTLPETTVVRQRGRAPRRRTPSPRRRRSQSPRRRRSQSPASQC) form a disordered region. Over residues 180-205 (QRGRAPRRRTPSPRRRRSQSPRRRRS) the composition is skewed to basic residues. The 1; half-length repeat unit spans residues 184 to 190 (APRRRTP). A 3 X 8 AA repeats of S-P-R-R-R-R-S-Q region spans residues 184 to 206 (APRRRTPSPRRRRSQSPRRRRSQ). A propeptide spanning residues 184–212 (APRRRTPSPRRRRSQSPRRRRSQSPASQC) is cleaved from the precursor. 2 tandem repeats follow at residues 191–198 (SPRRRRSQ) and 199–206 (SPRRRRSQ).

The protein belongs to the orthohepadnavirus precore antigen family. As to quaternary structure, homodimerizes. Post-translationally, phosphorylated. Cleaved by host furin.

It is found in the secreted. Its subcellular location is the host nucleus. In terms of biological role, may regulate immune response to the intracellular capsid in acting as a T-cell tolerogen, by having an immunoregulatory effect which prevents destruction of infected cells by cytotoxic T-cells. This immune regulation may predispose to chronicity during perinatal infections and prevent severe liver injury during adult infections. This is External core antigen from Hepatitis B virus genotype H subtype adw4 (isolate Nicaragua/2928Nic/1997) (HBV-H).